Here is a 221-residue protein sequence, read N- to C-terminus: Glutathione S-transferase 1 (221 aa).

The GST N-terminal domain maps to 7-88; that stretch reads QKMQLYSFSL…YLEEKFPENP (82 aa). Glutathione is bound by residues 17–22, valine 60, 72–73, glutamine 112, and 116–118; these read SSCAWR, DS, and NLA. The region spanning 93–221 is the GST C-terminal domain; the sequence is DLQKRALNYQ…ISPMLDEAKS (129 aa).

The protein belongs to the GST superfamily. Zeta family.

The catalysed reaction is RX + glutathione = an S-substituted glutathione + a halide anion + H(+). In terms of biological role, conjugation of reduced glutathione to a wide number of exogenous and endogenous hydrophobic electrophiles. This Dianthus caryophyllus (Carnation) protein is Glutathione S-transferase 1 (GST1).